A 396-amino-acid polypeptide reads, in one-letter code: Enoyl-[acyl-carrier-protein] reductase [NADH] (396 aa).

NAD(+) contacts are provided by residues 48–53 (GASTGY), 74–75 (FE), 111–112 (DA), and 139–140 (LA). Y225 contributes to the substrate binding site. Y235 acts as the Proton donor in catalysis. Residues K244 and 273-275 (VVT) each bind NAD(+).

The protein belongs to the TER reductase family. Monomer.

It carries out the reaction a 2,3-saturated acyl-[ACP] + NAD(+) = a (2E)-enoyl-[ACP] + NADH + H(+). The protein operates within lipid metabolism; fatty acid biosynthesis. Involved in the final reduction of the elongation cycle of fatty acid synthesis (FAS II). Catalyzes the reduction of a carbon-carbon double bond in an enoyl moiety that is covalently linked to an acyl carrier protein (ACP). In Colwellia psychrerythraea (strain 34H / ATCC BAA-681) (Vibrio psychroerythus), this protein is Enoyl-[acyl-carrier-protein] reductase [NADH].